The following is a 1191-amino-acid chain: Putative glycoside hydrolase 22789 (1191 aa).

The segment covering 173–187 (PSSSGASSVLPSPSA) has biased composition (low complexity). Residues 173–221 (PSSSGASSVLPSPSAHTPDAATDANHLPNPDPASGRQELTRAGRPARKK) form a disordered region.

It belongs to the glycoside hydrolase-like 3 (GHL3) family.

The chain is Putative glycoside hydrolase 22789 from Monosiga brevicollis (Choanoflagellate).